The chain runs to 474 residues: Gamma-aminobutyric acid receptor subunit beta-2 (474 aa).

Positions 1-25 (MWRVRKRGYFGIWSFPLIIAAVCAQ) are cleaved as a signal peptide. The Extracellular segment spans residues 26-244 (SVNDPSNMSL…SFKLKRNIGY (219 aa)). Residues N32 and N104 are each glycosylated (N-linked (GlcNAc...) asparagine). Y121 provides a ligand contact to histamine. C160 and C174 are oxidised to a cystine. N173 carries N-linked (GlcNAc...) asparagine glycosylation. Histamine is bound by residues 180 to 181 (SY) and T226. 4-aminobutanoate contacts are provided by Y181 and T226. Helical transmembrane passes span 245–266 (FILQTYMPSILITILSWVSFWI), 270–292 (ASAARVALGITTVLTMTTINTHL), and 304–326 (AIDMYLMGCFVFVFMALLEYALV). Over 327 to 451 (NYIFFGRGPQ…DLTDVNAIDR (125 aa)) the chain is Cytoplasmic. Y403 is subject to Phosphotyrosine. A helical membrane pass occupies residues 452–473 (WSRIFFPVVFSFFNIVYWLYYV).

The protein belongs to the ligand-gated ion channel (TC 1.A.9) family. Gamma-aminobutyric acid receptor (TC 1.A.9.5) subfamily. GABRB2 sub-subfamily. In terms of assembly, heteropentamer, formed by a combination of alpha (GABRA1-6), beta (GABRB1-3), gamma (GABRG1-3), delta (GABRD), epsilon (GABRE), rho (GABRR1-3), pi (GABRP) and theta (GABRQ) chains, each subunit exhibiting distinct physiological and pharmacological properties. Interacts with UBQLN1. May interact with KIF21B. Identified in a complex of 720 kDa composed of LHFPL4, NLGN2, GABRA1, GABRB2, GABRG2 and GABRB3. Glycosylated. As to expression, expressed in brain (at protein level), in cerebellar granule cells. Expressed in lungs, in alveolar epithelium.

It is found in the postsynaptic cell membrane. It localises to the cell membrane. The protein localises to the cytoplasmic vesicle membrane. The enzyme catalyses chloride(in) = chloride(out). With respect to regulation, allosterically activated by benzodiazepines and the anesthetic etomidate. Inhibited by the antagonist bicuculline. Potentiated by histamine. In terms of biological role, beta subunit of the heteropentameric ligand-gated chloride channel gated by gamma-aminobutyric acid (GABA), a major inhibitory neurotransmitter in the brain. GABA-gated chloride channels, also named GABA(A) receptors (GABAAR), consist of five subunits arranged around a central pore and contain GABA active binding site(s) located at the alpha and beta subunit interface(s). When activated by GABA, GABAARs selectively allow the flow of chloride anions across the cell membrane down their electrochemical gradient. Chloride influx into the postsynaptic neuron following GABAAR opening decreases the neuron ability to generate a new action potential, thereby reducing nerve transmission. GABAARs containing alpha-1 and beta-2 or -3 subunits exhibit synaptogenic activity; the gamma-2 subunit being necessary but not sufficient to induce rapid synaptic contacts formation. Extrasynaptic beta-2 receptors contribute to the tonic GABAergic inhibition. Beta-containing GABAARs can simultaneously bind GABA and histamine where histamine binds at the interface of two neighboring beta subunits, which may be involved in the regulation of sleep and wakefulness. The sequence is that of Gamma-aminobutyric acid receptor subunit beta-2 from Rattus norvegicus (Rat).